Consider the following 176-residue polypeptide: MKNIAKKDLFINNEIRVREVRLIGLDGEQLGIKPLAQAQAIADDANVDLVLIQPQATPPVARIMDYGKFKFEYQKKQKEQRKKQSVVTIKEVRLSPVIDKGDFETKLRNGRKFLEKGNKVKVSIRFKGRMITHKEIGAKVLADFAEATQDIAIIEQRAKMDGRQMFMQLAPIPDKK.

Belongs to the IF-3 family. In terms of assembly, monomer.

The protein localises to the cytoplasm. IF-3 binds to the 30S ribosomal subunit and shifts the equilibrium between 70S ribosomes and their 50S and 30S subunits in favor of the free subunits, thus enhancing the availability of 30S subunits on which protein synthesis initiation begins. In Streptococcus mutans serotype c (strain ATCC 700610 / UA159), this protein is Translation initiation factor IF-3.